The following is a 92-amino-acid chain: Small ribosomal subunit protein uS19 (92 aa).

It belongs to the universal ribosomal protein uS19 family.

Functionally, protein S19 forms a complex with S13 that binds strongly to the 16S ribosomal RNA. This is Small ribosomal subunit protein uS19 from Bartonella bacilliformis (strain ATCC 35685 / KC583 / Herrer 020/F12,63).